Consider the following 167-residue polypeptide: UPF0114 protein in repA1-repA2 intergenic region (167 aa).

Transmembrane regions (helical) follow at residues 15-35 (LMFP…LKFF), 53-73 (LVLI…LVMV), and 136-156 (IILC…MAYI).

This sequence belongs to the UPF0114 family.

The protein localises to the cell membrane. In Buchnera aphidicola subsp. Pterocomma populeum, this protein is UPF0114 protein in repA1-repA2 intergenic region.